A 182-amino-acid chain; its full sequence is Protein canopy homolog 2 (182 aa).

The first 20 residues, 1-20, serve as a signal peptide directing secretion; it reads MKGWGWLALLLGVLLGTAWA. In terms of domain architecture, Saposin B-type spans 24-175; that stretch reads QDLHCGACRA…KRTDLCDHAL (152 aa). Intrachain disulfides connect Cys-28-Cys-171, Cys-31-Cys-164, and Cys-86-Cys-137. Phosphoserine is present on Ser-115. The Prevents secretion from ER signature appears at 179 to 182; sequence HDEL.

The protein belongs to the canopy family. As to quaternary structure, interacts with MYLIP/MIR.

The protein resides in the endoplasmic reticulum. Positive regulator of neurite outgrowth by stabilizing myosin regulatory light chain (MRLC). It prevents MIR-mediated MRLC ubiquitination and its subsequent proteasomal degradation. The polypeptide is Protein canopy homolog 2 (Cnpy2) (Mus musculus (Mouse)).